Reading from the N-terminus, the 129-residue chain is Protein RALF-like 34 (129 aa).

A signal peptide spans 1-23 (MAASSLNLLLILSLLTFISLQRS). The propeptide at 24 to 76 (ESLSDNPSLTLLPDGFDWPISHSDEFDIIDGEESFEVTEEDDGVTDRRSLYWR) is removed in mature form. 2 cysteine pairs are disulfide-bonded: Cys-94-Cys-107 and Cys-121-Cys-127.

It belongs to the plant rapid alkalinization factor (RALF) family. In terms of processing, proteolytically cleaved, probably by S1P, a subtilisin-like serine protease (subtilase). In terms of tissue distribution, expressed in roots, stems and leaves.

The protein resides in the secreted. Functionally, cell signaling peptide that may regulate plant stress, growth, and development. Mediates a rapid alkalinization of extracellular space by mediating a transient increase in the cytoplasmic Ca(2+) concentration leading to a calcium-dependent signaling events through a cell surface receptor and a concomitant activation of some intracellular mitogen-activated protein kinases. The protein is Protein RALF-like 34 (RALFL34) of Arabidopsis thaliana (Mouse-ear cress).